A 208-amino-acid chain; its full sequence is Uracil phosphoribosyltransferase (208 aa).

5-phospho-alpha-D-ribose 1-diphosphate-binding positions include Arg-78, Arg-103, and 130-138 (DPMLATGGT). Uracil is bound by residues Ile-193 and 198–200 (GDA). 5-phospho-alpha-D-ribose 1-diphosphate is bound at residue Asp-199.

It belongs to the UPRTase family. Mg(2+) is required as a cofactor.

The enzyme catalyses UMP + diphosphate = 5-phospho-alpha-D-ribose 1-diphosphate + uracil. Its pathway is pyrimidine metabolism; UMP biosynthesis via salvage pathway; UMP from uracil: step 1/1. Its activity is regulated as follows. Allosterically activated by GTP. Functionally, catalyzes the conversion of uracil and 5-phospho-alpha-D-ribose 1-diphosphate (PRPP) to UMP and diphosphate. This is Uracil phosphoribosyltransferase from Blochmanniella floridana.